Reading from the N-terminus, the 179-residue chain is Replication restart protein DnaT (179 aa).

Residues 151 to 168 (SRSSNGGMPQRDINSVSE) are compositionally biased toward polar residues. The disordered stretch occupies residues 151-179 (SRSSNGGMPQRDINSVSEPDNHIPPGFRG).

Belongs to the DnaT family. Homooligomerizes. Interacts with PriB. Component of the replication restart primosome. Primosome assembly occurs via a 'hand-off' mechanism. PriA binds to replication forks, subsequently PriB then DnaT bind; DnaT then displaces ssDNA to generate the helicase loading substrate.

Functionally, involved in the restart of stalled replication forks, which reloads the replicative helicase on sites other than the origin of replication. Can function in multiple replication restart pathways. Displaces ssDNA from a PriB-ssDNA complex. Probably forms a spiral filament on ssDNA. The protein is Replication restart protein DnaT of Salmonella arizonae (strain ATCC BAA-731 / CDC346-86 / RSK2980).